We begin with the raw amino-acid sequence, 65 residues long: Conotoxin Cal1.3 (65 aa).

Positions 1–18 (MRCLPVFIILLLLASTAA) are cleaved as a signal peptide. Residues 19 to 49 (VDVAGSKLKRRLERKPYQGSQAYVKKTAFGL) constitute a propeptide that is removed on maturation. 2 disulfide bridges follow: cysteine 52/cysteine 62 and cysteine 53/cysteine 59. A 4-hydroxyproline modification is found at proline 61. Cysteine 62 is subject to Cysteine amide.

Belongs to the conotoxin T superfamily. Expressed by the venom duct.

It localises to the secreted. Its function is as follows. Probable neurotoxin with unknown target. Possibly targets ion channels. The protein is Conotoxin Cal1.3 of Californiconus californicus (California cone).